Here is a 521-residue protein sequence, read N- to C-terminus: Cytochrome P450 monooxygenase astF (521 aa).

Residues 14–34 (TMATFLLPVAIGTIILLFLYG) form a helical membrane-spanning segment. N-linked (GlcNAc...) asparagine glycans are attached at residues Asn198, Asn218, Asn268, and Asn281. Heme is bound at residue Cys430.

It belongs to the cytochrome P450 family. It depends on heme as a cofactor.

It is found in the membrane. It functions in the pathway secondary metabolite biosynthesis; terpenoid biosynthesis. Its function is as follows. Cytochrome P450 monooxygenase; part of the gene cluster that mediates the biosynthesis of astellolides, drimane-type sesquiterpene esters that show antimicrobial, anti-inflammatory, and anti-tumor activities. The first step in astellolide biosynthesis is performed by the sesquiterpene cyclase astC that catalyzes the formation of drimanyl pyrophosphate from farnesyl pyrophosphate. Drimanyl pyrophosphate is then dephosphorylated by the sesquiterpene phosphatase astI to produce drimanyl monophosphate which is further dephosphorylated to drim-8-ene-11-ol by atsK. Drim-8-ene-11-ol is converted to confertifolin, probably by the cytochrome P450 monooxygenase astD and/or the dehydrogenase astE. The cytochrome P450 monooxygenases astB, astF and astJ then hydroxylate confertifolin at C6, C14, or C15 to form trihydroxy confertifolin. The nonribosomal peptide synthetase astA catalyzes ester bond formation between trihydroxy contifolin and benzoic acid (BA) or 4-hydroxy benzoic acid (4HBA), leading to the formation of dideacetyl astellolides A and B, respectively. Finally, the O-acetyltransferase astG converts dideacetyl astellolides A and B into deacetyl astellolides A and B. The polypeptide is Cytochrome P450 monooxygenase astF (Aspergillus oryzae (strain ATCC 42149 / RIB 40) (Yellow koji mold)).